A 476-amino-acid chain; its full sequence is Aspartyl/glutamyl-tRNA(Asn/Gln) amidotransferase subunit B (476 aa).

It belongs to the GatB/GatE family. GatB subfamily. Heterotrimer of A, B and C subunits.

The enzyme catalyses L-glutamyl-tRNA(Gln) + L-glutamine + ATP + H2O = L-glutaminyl-tRNA(Gln) + L-glutamate + ADP + phosphate + H(+). It catalyses the reaction L-aspartyl-tRNA(Asn) + L-glutamine + ATP + H2O = L-asparaginyl-tRNA(Asn) + L-glutamate + ADP + phosphate + 2 H(+). Its function is as follows. Allows the formation of correctly charged Asn-tRNA(Asn) or Gln-tRNA(Gln) through the transamidation of misacylated Asp-tRNA(Asn) or Glu-tRNA(Gln) in organisms which lack either or both of asparaginyl-tRNA or glutaminyl-tRNA synthetases. The reaction takes place in the presence of glutamine and ATP through an activated phospho-Asp-tRNA(Asn) or phospho-Glu-tRNA(Gln). The polypeptide is Aspartyl/glutamyl-tRNA(Asn/Gln) amidotransferase subunit B (Enterococcus faecalis (strain ATCC 700802 / V583)).